The primary structure comprises 278 residues: MPAPATYATGLTPLPTPVPKVSKNIMERFSLKGKVASITGSSSGIGFAVAEAFAQAGADVAIWYNSKPSDEKAEYLSKTYGVRSKAYKCAVTNAKQVETTIQTIEKDFGKIDIFIANAGIPWTAGPMIDVPNNEEWDKVVDLDLNGAYYCAKYAGQIFKKQGYGSFIFTASMSGHIVNIPQMQACYNAAKCAVLHLSRSLAVEWAGFARCNTVSPGYMATEISDFIPRDTKEKWWQLIPMGREGDPSELAGAYIYLASDASTYTTGADILVDGGYCCP.

NADP(+)-binding residues include isoleucine 45, asparagine 117, and lysine 152. Residues serine 171 and tyrosine 186 each act as proton donor in the active site. Tyrosine 186, lysine 190, and threonine 220 together coordinate NADP(+). The active-site Lowers pKa of active site Tyr is lysine 190.

Belongs to the short-chain dehydrogenases/reductases (SDR) family. In terms of assembly, homotetramer.

It carries out the reaction D-mannitol + NADP(+) = D-fructose + NADPH + H(+). In terms of biological role, versatile oxidoreductase that catalyzes the oxidation and reduction of polar as well as non-polar substrates at a very broad pH range. Preferentially oxidizes secondary alcohols. Has highest activity for racemic 2-heptanol and racemic octanol. Is also an efficient reductase for selected substrates. Substrate selectivity was found for medium chain length ketones with the carbonyl function at position C-2. Has highest activities for ribulose and fructose. The enzyme is (R)-selective in the reduction direction and produces exclusively the (R)-enantiomer. The chain is Probable NADP-dependent mannitol dehydrogenase from Yarrowia lipolytica (strain CLIB 122 / E 150) (Yeast).